A 536-amino-acid chain; its full sequence is Chaperonin GroEL (536 aa).

ATP contacts are provided by residues 30–33 (TLGP), 86–90 (DGTTT), glycine 414, and aspartate 494.

Belongs to the chaperonin (HSP60) family. In terms of assembly, forms a cylinder of 14 subunits composed of two heptameric rings stacked back-to-back. Interacts with the co-chaperonin GroES.

Its subcellular location is the cytoplasm. It carries out the reaction ATP + H2O + a folded polypeptide = ADP + phosphate + an unfolded polypeptide.. Functionally, together with its co-chaperonin GroES, plays an essential role in assisting protein folding. The GroEL-GroES system forms a nano-cage that allows encapsulation of the non-native substrate proteins and provides a physical environment optimized to promote and accelerate protein folding. The sequence is that of Chaperonin GroEL from Methanosarcina barkeri (strain Fusaro / DSM 804).